The following is a 375-amino-acid chain: 23S rRNA (uracil(747)-C(5))-methyltransferase RlmC (375 aa).

[4Fe-4S] cluster-binding residues include cysteine 3, cysteine 11, cysteine 14, and cysteine 87. S-adenosyl-L-methionine-binding residues include glutamine 212, phenylalanine 241, glutamate 262, and asparagine 307. The active-site Nucleophile is the cysteine 334.

It belongs to the class I-like SAM-binding methyltransferase superfamily. RNA M5U methyltransferase family. RlmC subfamily.

It catalyses the reaction uridine(747) in 23S rRNA + S-adenosyl-L-methionine = 5-methyluridine(747) in 23S rRNA + S-adenosyl-L-homocysteine + H(+). Its function is as follows. Catalyzes the formation of 5-methyl-uridine at position 747 (m5U747) in 23S rRNA. This chain is 23S rRNA (uracil(747)-C(5))-methyltransferase RlmC, found in Pectobacterium atrosepticum (strain SCRI 1043 / ATCC BAA-672) (Erwinia carotovora subsp. atroseptica).